The following is a 306-amino-acid chain: UPF0282 protein Pars_1056 (306 aa).

Belongs to the UPF0282 family.

In Pyrobaculum arsenaticum (strain DSM 13514 / JCM 11321 / PZ6), this protein is UPF0282 protein Pars_1056.